The chain runs to 372 residues: M protein, serotype 2.2 (372 aa).

Positions Met1 to Ala41 are cleaved as a signal peptide. 3 C repeats span residues Ala124 to His158, Lys166 to Tyr200, and Gln215 to Leu249. Basic and acidic residues-rich tracts occupy residues Lys125 to Thr169, Thr226 to Thr246, and Glu260 to Gln274. Disordered regions lie at residues Lys125–Ala191 and Glu211–Gln274. 4 D repeats span residues Ala275 to Gln280, Gly281 to Glu286, Ala289 to Glu294, and Ala296 to Glu301. A compositionally biased stretch (basic and acidic residues) spans Leu295–Ala304. The interval Leu295–Glu344 is disordered. Over residues Ala322 to Ser341 the composition is skewed to polar residues. Residues Leu339 to Gly343 carry the LPXTG sorting signal motif. Thr342 bears the Pentaglycyl murein peptidoglycan amidated threonine mark. A propeptide spans Gly343 to Asn372 (removed by sortase).

Belongs to the M protein family.

The protein localises to the secreted. Its subcellular location is the cell wall. Its function is as follows. This protein is one of the different antigenic serotypes of protein M. Protein M is closely associated with virulence of the bacterium and can render the organism resistant to phagocytosis. This Streptococcus pyogenes protein is M protein, serotype 2.2 (emmL2.2).